Reading from the N-terminus, the 83-residue chain is Small ribosomal subunit protein bS16 (83 aa).

This sequence belongs to the bacterial ribosomal protein bS16 family.

In Borrelia duttonii (strain Ly), this protein is Small ribosomal subunit protein bS16.